A 406-amino-acid polypeptide reads, in one-letter code: ATP phosphoribosyltransferase regulatory subunit (406 aa).

Belongs to the class-II aminoacyl-tRNA synthetase family. HisZ subfamily. In terms of assembly, heteromultimer composed of HisG and HisZ subunits.

Its subcellular location is the cytoplasm. Its pathway is amino-acid biosynthesis; L-histidine biosynthesis; L-histidine from 5-phospho-alpha-D-ribose 1-diphosphate: step 1/9. Required for the first step of histidine biosynthesis. May allow the feedback regulation of ATP phosphoribosyltransferase activity by histidine. The polypeptide is ATP phosphoribosyltransferase regulatory subunit (Methylococcus capsulatus (strain ATCC 33009 / NCIMB 11132 / Bath)).